A 219-amino-acid polypeptide reads, in one-letter code: Isovaleryl-homoserine lactone synthase (219 aa).

Belongs to the autoinducer synthase family.

It catalyses the reaction 3-methylbutanoyl-CoA + S-adenosyl-L-methionine = N-isovaleryl-L-homoserine lactone + S-methyl-5'-thioadenosine + CoA + H(+). Functionally, catalyzes the synthesis of IV-HSL (isovaleryl-homoserine lactone), a quorum-sensing (QS) autoinducer molecule which binds to BjaR1 transcriptional regulator to activate expression of QS-dependent genes. Is active with isovaleryl-CoA but cannot use isovaleryl-ACP as acyl donor. The protein is Isovaleryl-homoserine lactone synthase (bjaI) of Bradyrhizobium diazoefficiens (strain JCM 10833 / BCRC 13528 / IAM 13628 / NBRC 14792 / USDA 110).